Reading from the N-terminus, the 398-residue chain is Endoglucanase (398 aa).

Residues Met1–Ala23 form the signal peptide. Glu58 functions as the Proton donor in the catalytic mechanism. Asp119 functions as the Nucleophile in the catalytic mechanism.

This sequence belongs to the glycosyl hydrolase 8 (cellulase D) family.

It localises to the secreted. The enzyme catalyses Endohydrolysis of (1-&gt;4)-beta-D-glucosidic linkages in cellulose, lichenin and cereal beta-D-glucans.. It functions in the pathway glycan metabolism; bacterial cellulose biosynthesis. Its function is as follows. Hydrolyzes carboxymethylcellulose. The protein is Endoglucanase (bcsZ) of Pseudomonas fluorescens (strain SBW25).